The sequence spans 762 residues: Dolichyl-phosphate-mannose--protein mannosyltransferase 4 (762 aa).

The span at Met-1–Gly-10 shows a compositional bias: basic residues. Residues Met-1–Leu-24 are disordered. Residues Met-1–Ser-53 lie on the Lumenal side of the membrane. A helical transmembrane segment spans residues Phe-54–Pro-74. At Lys-75 to Ala-136 the chain is on the cytoplasmic side. The chain crosses the membrane as a helical span at residues Pro-137–Phe-157. Over Asn-158–Arg-166 the chain is Lumenal. A helical membrane pass occupies residues Ala-167–Thr-187. Over Arg-188–Leu-189 the chain is Cytoplasmic. Residues Ile-190–Phe-210 form a helical membrane-spanning segment. At Tyr-211 to Gln-217 the chain is on the lumenal side. A helical membrane pass occupies residues Pro-218 to Ile-238. Residues Ser-239–Tyr-242 lie on the Cytoplasmic side of the membrane. A helical transmembrane segment spans residues Val-243–Leu-263. The Lumenal segment spans residues Asp-264–Asn-283. A helical membrane pass occupies residues Gly-284–Leu-304. Topologically, residues Asn-305 to Phe-593 are cytoplasmic. MIR domains lie at Ser-331–Pro-391, Gly-399–Leu-458, and Gly-464–Ile-521. Residues Ile-594–Ile-614 form a helical membrane-spanning segment. Topologically, residues Val-615 to Lys-635 are lumenal. A helical membrane pass occupies residues Leu-636–Leu-656. Residues Met-657–Thr-716 lie on the Cytoplasmic side of the membrane. Residues Val-717–Val-737 traverse the membrane as a helical segment. Topologically, residues Tyr-738 to Lys-762 are lumenal. Residue Asn-759 is glycosylated (N-linked (GlcNAc...) asparagine).

It belongs to the glycosyltransferase 39 family. In terms of assembly, forms a functional homodimer and may form a heterodimer with PMT6. Interacts with RCR1.

The protein resides in the endoplasmic reticulum membrane. The enzyme catalyses a di-trans,poly-cis-dolichyl beta-D-mannosyl phosphate + L-seryl-[protein] = 3-O-(alpha-D-mannosyl)-L-seryl-[protein] + a di-trans,poly-cis-dolichyl phosphate + H(+). It catalyses the reaction a di-trans,poly-cis-dolichyl beta-D-mannosyl phosphate + L-threonyl-[protein] = 3-O-(alpha-D-mannosyl)-L-threonyl-[protein] + a di-trans,poly-cis-dolichyl phosphate + H(+). Its pathway is protein modification; protein glycosylation. Functionally, protein O-mannosyltransferase involved in O-glycosylation which is essential for cell wall rigidity. Forms a homodimeric complex to transfer mannose from Dol-P-mannose to Ser or Thr residues on proteins. Specifically acts on secretory proteins with an ER-luminally oriented Ser/Thr-rich region flanked by a membrane anchor such as FUS1, AXL2, GAS1, KEX2, MID2, WSC1, WSC2, OPY2, PRM5, RAX2, or YNL176. The chain is Dolichyl-phosphate-mannose--protein mannosyltransferase 4 from Saccharomyces cerevisiae (strain ATCC 204508 / S288c) (Baker's yeast).